We begin with the raw amino-acid sequence, 295 residues long: Light-independent protochlorophyllide reductase iron-sulfur ATP-binding protein (295 aa).

Residues 39–44 and Lys-68 each bind ATP; that span reads GIGKST. Ser-43 serves as a coordination point for Mg(2+). [4Fe-4S] cluster contacts are provided by Cys-124 and Cys-158. 209–210 contacts ATP; that stretch reads NR.

This sequence belongs to the NifH/BchL/ChlL family. In terms of assembly, homodimer. Protochlorophyllide reductase is composed of three subunits; ChlL, ChlN and ChlB. The cofactor is [4Fe-4S] cluster.

The enzyme catalyses chlorophyllide a + oxidized 2[4Fe-4S]-[ferredoxin] + 2 ADP + 2 phosphate = protochlorophyllide a + reduced 2[4Fe-4S]-[ferredoxin] + 2 ATP + 2 H2O. The protein operates within porphyrin-containing compound metabolism; chlorophyll biosynthesis (light-independent). Its function is as follows. Component of the dark-operative protochlorophyllide reductase (DPOR) that uses Mg-ATP and reduced ferredoxin to reduce ring D of protochlorophyllide (Pchlide) to form chlorophyllide a (Chlide). This reaction is light-independent. The L component serves as a unique electron donor to the NB-component of the complex, and binds Mg-ATP. In Prochlorococcus marinus (strain AS9601), this protein is Light-independent protochlorophyllide reductase iron-sulfur ATP-binding protein.